A 153-amino-acid chain; its full sequence is MAPAAATGGSTLPSGFSVFTTLPDLLFIFEFIFGGLVWILVASSLVPWPLVQGWVMFVSVFCFVATTTLIILYIIGAHGGETSWVTLDAAYHCTAALFYLSASVLEALATITMQDGFTYRHYHENIAAVVFSYIATLLYVVHAVFSLIRWKSS.

The Cytoplasmic portion of the chain corresponds to 1–24; the sequence is MAPAAATGGSTLPSGFSVFTTLPD. An MARVEL domain is found at 18 to 151; the sequence is VFTTLPDLLF…HAVFSLIRWK (134 aa). A helical membrane pass occupies residues 25–46; sequence LLFIFEFIFGGLVWILVASSLV. Topologically, residues 47-53 are extracellular; the sequence is PWPLVQG. A helical membrane pass occupies residues 54 to 75; that stretch reads WVMFVSVFCFVATTTLIILYII. Topologically, residues 76-92 are cytoplasmic; it reads GAHGGETSWVTLDAAYH. A helical transmembrane segment spans residues 93–114; sequence CTAALFYLSASVLEALATITMQ. The Extracellular portion of the chain corresponds to 115–125; that stretch reads DGFTYRHYHEN. A helical membrane pass occupies residues 126 to 147; that stretch reads IAAVVFSYIATLLYVVHAVFSL. Over 148 to 153 the chain is Cytoplasmic; it reads IRWKSS.

It belongs to the MAL family. As to quaternary structure, interacts with PLP1. Lipoprotein.

The protein resides in the membrane. It is found in the cell membrane. In terms of biological role, may be involved in vesicular trafficking from the Golgi apparatus to the cell membrane. Plays a role in the maintenance of the myelin sheath, and in axon-glia and glia-glia interactions. The polypeptide is Myelin and lymphocyte protein (MAL) (Homo sapiens (Human)).